We begin with the raw amino-acid sequence, 374 residues long: Alcohol dehydrogenase class-3 (374 aa).

The residue at position 2 (A2) is an N-acetylalanine. Zn(2+) is bound by residues C45, H67, C97, C100, C103, C111, and C174. The residue at position 233 (K233) is an N6-succinyllysine. Position 247 is a phosphoserine (S247). N6-succinyllysine is present on K315. Residues S324 and S351 each carry the phosphoserine modification.

This sequence belongs to the zinc-containing alcohol dehydrogenase family. Class-III subfamily. As to quaternary structure, homodimer. Requires Zn(2+) as cofactor.

Its subcellular location is the cytoplasm. The catalysed reaction is a primary alcohol + NAD(+) = an aldehyde + NADH + H(+). It catalyses the reaction a secondary alcohol + NAD(+) = a ketone + NADH + H(+). It carries out the reaction S-(hydroxymethyl)glutathione + NADP(+) = S-formylglutathione + NADPH + H(+). The enzyme catalyses S-(hydroxymethyl)glutathione + NAD(+) = S-formylglutathione + NADH + H(+). The catalysed reaction is 20-oxo-(5Z,8Z,11Z,14Z)-eicosatetraenoate + NAD(+) + H2O = (5Z,8Z,11Z,14Z)-eicosatetraenedioate + NADH + 2 H(+). It catalyses the reaction 20-hydroxy-(5Z,8Z,11Z,14Z)-eicosatetraenoate + NAD(+) = 20-oxo-(5Z,8Z,11Z,14Z)-eicosatetraenoate + NADH + H(+). It carries out the reaction S-nitrosoglutathione + NADH + H(+) = S-(hydroxysulfenamide)glutathione + NAD(+). In terms of biological role, catalyzes the oxidation of long-chain primary alcohols and the oxidation of S-(hydroxymethyl) glutathione. Also oxidizes long chain omega-hydroxy fatty acids, such as 20-HETE, producing both the intermediate aldehyde, 20-oxoarachidonate and the end product, a dicarboxylic acid, (5Z,8Z,11Z,14Z)-eicosatetraenedioate. Class-III ADH is remarkably ineffective in oxidizing ethanol. Required for clearance of cellular formaldehyde, a cytotoxic and carcinogenic metabolite that induces DNA damage. Also acts as a S-nitroso-glutathione reductase by catalyzing the NADH-dependent reduction of S-nitrosoglutathione, thereby regulating protein S-nitrosylation. The protein is Alcohol dehydrogenase class-3 of Homo sapiens (Human).